Reading from the N-terminus, the 136-residue chain is Ribosome-binding factor A (136 aa).

This sequence belongs to the RbfA family. Monomer. Binds 30S ribosomal subunits, but not 50S ribosomal subunits or 70S ribosomes.

It is found in the cytoplasm. One of several proteins that assist in the late maturation steps of the functional core of the 30S ribosomal subunit. Associates with free 30S ribosomal subunits (but not with 30S subunits that are part of 70S ribosomes or polysomes). Required for efficient processing of 16S rRNA. May interact with the 5'-terminal helix region of 16S rRNA. The chain is Ribosome-binding factor A from Cellvibrio japonicus (strain Ueda107) (Pseudomonas fluorescens subsp. cellulosa).